A 940-amino-acid polypeptide reads, in one-letter code: Isoleucine--tRNA ligase (940 aa).

The 'HIGH' region signature appears at 58–68; the sequence is PYANGDIHIGH. Residue E564 participates in L-isoleucyl-5'-AMP binding. A 'KMSKS' region motif is present at residues 605–609; it reads KMSKS. K608 serves as a coordination point for ATP. C903, C906, C923, and C926 together coordinate Zn(2+).

It belongs to the class-I aminoacyl-tRNA synthetase family. IleS type 1 subfamily. Monomer. The cofactor is Zn(2+).

The protein localises to the cytoplasm. The catalysed reaction is tRNA(Ile) + L-isoleucine + ATP = L-isoleucyl-tRNA(Ile) + AMP + diphosphate. Functionally, catalyzes the attachment of isoleucine to tRNA(Ile). As IleRS can inadvertently accommodate and process structurally similar amino acids such as valine, to avoid such errors it has two additional distinct tRNA(Ile)-dependent editing activities. One activity is designated as 'pretransfer' editing and involves the hydrolysis of activated Val-AMP. The other activity is designated 'posttransfer' editing and involves deacylation of mischarged Val-tRNA(Ile). The chain is Isoleucine--tRNA ligase from Shewanella halifaxensis (strain HAW-EB4).